A 103-amino-acid chain; its full sequence is Stefin-3 (103 aa).

The Secondary area of contact motif lies at 52–56 (QVVAG).

The protein belongs to the cystatin family.

It is found in the cytoplasm. Its function is as follows. This is an intracellular thiol proteinase inhibitor. The protein is Stefin-3 (Stfa3) of Mus musculus (Mouse).